Here is a 222-residue protein sequence, read N- to C-terminus: Peroxiredoxin (222 aa).

The region spanning 2-157 is the Thioredoxin domain; that stretch reads VVLGQKFPEV…ILRLVEALQT (156 aa). Residue Cys-44 is the Cysteine sulfenic acid (-SOH) intermediate of the active site. Arg-120 is a substrate binding site. The cysteines at positions 211 and 217 are disulfide-linked.

The protein belongs to the peroxiredoxin family. Prx6 subfamily. Homodecamer. Pentamer of dimers that assemble into a ring structure.

The protein localises to the cytoplasm. It catalyses the reaction a hydroperoxide + [thioredoxin]-dithiol = an alcohol + [thioredoxin]-disulfide + H2O. Functionally, thiol-specific peroxidase that catalyzes the reduction of hydrogen peroxide and organic hydroperoxides to water and alcohols, respectively. Plays a role in cell protection against oxidative stress by detoxifying peroxides. The polypeptide is Peroxiredoxin (Nanoarchaeum equitans (strain Kin4-M)).